A 341-amino-acid polypeptide reads, in one-letter code: tRNA N6-adenosine threonylcarbamoyltransferase (341 aa).

Histidine 115 and histidine 119 together coordinate Fe cation. Substrate contacts are provided by residues 137 to 141, aspartate 170, glycine 183, aspartate 187, and asparagine 276; that span reads IVSGG. Aspartate 304 contributes to the Fe cation binding site.

This sequence belongs to the KAE1 / TsaD family. Requires Fe(2+) as cofactor.

Its subcellular location is the cytoplasm. It catalyses the reaction L-threonylcarbamoyladenylate + adenosine(37) in tRNA = N(6)-L-threonylcarbamoyladenosine(37) in tRNA + AMP + H(+). Its function is as follows. Required for the formation of a threonylcarbamoyl group on adenosine at position 37 (t(6)A37) in tRNAs that read codons beginning with adenine. Is involved in the transfer of the threonylcarbamoyl moiety of threonylcarbamoyl-AMP (TC-AMP) to the N6 group of A37, together with TsaE and TsaB. TsaD likely plays a direct catalytic role in this reaction. This Staphylococcus aureus (strain Mu3 / ATCC 700698) protein is tRNA N6-adenosine threonylcarbamoyltransferase.